We begin with the raw amino-acid sequence, 378 residues long: Alkanesulfonate monooxygenase (378 aa).

Belongs to the SsuD family.

It carries out the reaction an alkanesulfonate + FMNH2 + O2 = an aldehyde + FMN + sulfite + H2O + 2 H(+). Functionally, catalyzes the desulfonation of aliphatic sulfonates. This Bacillus velezensis (strain DSM 23117 / BGSC 10A6 / LMG 26770 / FZB42) (Bacillus amyloliquefaciens subsp. plantarum) protein is Alkanesulfonate monooxygenase.